Consider the following 710-residue polypeptide: Choline transporter-like protein 2 (710 aa).

Residues 1–34 lie on the Cytoplasmic side of the membrane; it reads MEDDGKSPPDSAYGEPKKYDPNFKGPIQNRGCTD. A helical membrane pass occupies residues 35-55; it reads ILCCILIVLGIIAYVAVGIVA. Over 56-236 the chain is Extracellular; it reads WTYGDPRKVI…KIFEDYTVSW (181 aa). N-linked (GlcNAc...) asparagine glycosylation is found at N147, N190, and N204. A helical membrane pass occupies residues 237–257; sequence YWIIIGLIIAMVISLIFVVLL. Residues 258-260 are Cytoplasmic-facing; sequence RFL. A helical transmembrane segment spans residues 261–281; it reads AGIMVWVMIVLVIAVMGYGIF. At 282–319 the chain is on the extracellular side; it reads HCYMEYARLKGQSGSDVTLKDIGFQTDIRVYLHLRQTW. The helical transmembrane segment at 320-340 threads the bilayer; the sequence is LAFMIILCILEVIVILLLIFL. Residues 341–368 are Cytoplasmic-facing; it reads RKRIMIAIALIKEASRAVGFVMSSLVFP. The chain crosses the membrane as a helical span at residues 369–389; that stretch reads LFTFLLVCLCIAYWAITAVFL. Residues 390–458 are Extracellular-facing; the sequence is STSNEAVYKV…FQIYNAFMFL (69 aa). N-linked (GlcNAc...) asparagine glycosylation is found at N401, N418, and N421. Residues 459 to 481 form a helical membrane-spanning segment; it reads WLANFVIALGQVTLAGAFASYYW. Topologically, residues 482–508 are cytoplasmic; sequence AFKKPDDMPAFPIFSSLGRALRYHTGS. Residues 509–529 traverse the membrane as a helical segment; the sequence is LAFGSLILAIVQMIRILLEYL. The Extracellular segment spans residues 530–567; sequence DHKLKGADNKCARFLLCCLKCCFWCLEKFIKFLNRNAY. Residues 568–588 form a helical membrane-spanning segment; that stretch reads IMIAIYGTNFCTSARNAFFLL. Residues 589 to 603 are Cytoplasmic-facing; it reads MRNIIRVAVLDKVTD. The chain crosses the membrane as a helical span at residues 604 to 624; it reads FLLFLGKLLVVGCVGILAFFF. The Extracellular segment spans residues 625 to 642; that stretch reads FSRRIQIVQDTAPTLNYY. Residues 643–663 traverse the membrane as a helical segment; sequence WVPILTVILGSYLIAHGFFSV. The Cytoplasmic segment spans residues 664–710; that stretch reads YGMCVDTLFLCFLEDLERNDGSTERPYFMSGSLQKLLNKSNQTKPDK.

The protein belongs to the CTL (choline transporter-like) family.

It is found in the cell membrane. Its subcellular location is the mitochondrion outer membrane. It catalyses the reaction choline(out) + n H(+)(in) = choline(in) + n H(+)(out). The enzyme catalyses ethanolamine(out) + n H(+)(in) = ethanolamine(in) + n H(+)(out). In terms of biological role, choline/H+ antiporter, mainly in mitochodria. Also acts as a low-affinity ethanolamine/H+ antiporter, regulating the supply of extracellular ethanolamine (Etn) for the CDP-Etn pathway, redistribute intracellular Etn and balance the CDP-Cho and CDP-Etn arms of the Kennedy pathway. This is Choline transporter-like protein 2 (slc44a2) from Xenopus laevis (African clawed frog).